The sequence spans 214 residues: NADH-ubiquinone oxidoreductase chain 5 (214 aa).

Helical transmembrane passes span 14-34, 58-78, 92-112, and 192-212; these read LNTW…TYSI, PLIT…GMII, MPLI…ILAL, and TGLI…MILM.

It belongs to the complex I subunit 5 family.

Its subcellular location is the mitochondrion inner membrane. It catalyses the reaction a ubiquinone + NADH + 5 H(+)(in) = a ubiquinol + NAD(+) + 4 H(+)(out). Core subunit of the mitochondrial membrane respiratory chain NADH dehydrogenase (Complex I) that is believed to belong to the minimal assembly required for catalysis. Complex I functions in the transfer of electrons from NADH to the respiratory chain. The immediate electron acceptor for the enzyme is believed to be ubiquinone. In Anser caerulescens (Snow goose), this protein is NADH-ubiquinone oxidoreductase chain 5 (MT-ND5).